A 458-amino-acid polypeptide reads, in one-letter code: ATP synthase subunit beta (458 aa).

147–154 is an ATP binding site; that stretch reads GGAGVGKT.

This sequence belongs to the ATPase alpha/beta chains family. As to quaternary structure, F-type ATPases have 2 components, CF(1) - the catalytic core - and CF(0) - the membrane proton channel. CF(1) has five subunits: alpha(3), beta(3), gamma(1), delta(1), epsilon(1). CF(0) has three main subunits: a(1), b(2) and c(9-12). The alpha and beta chains form an alternating ring which encloses part of the gamma chain. CF(1) is attached to CF(0) by a central stalk formed by the gamma and epsilon chains, while a peripheral stalk is formed by the delta and b chains.

It localises to the cell inner membrane. The enzyme catalyses ATP + H2O + 4 H(+)(in) = ADP + phosphate + 5 H(+)(out). Functionally, produces ATP from ADP in the presence of a proton gradient across the membrane. The catalytic sites are hosted primarily by the beta subunits. This chain is ATP synthase subunit beta, found in Chromohalobacter salexigens (strain ATCC BAA-138 / DSM 3043 / CIP 106854 / NCIMB 13768 / 1H11).